Reading from the N-terminus, the 136-residue chain is Histone H3 (136 aa).

Residues 1–43 (MARTKQTARKSTGGKAPRKQLATKAARKSAPASGGVKKPHRYR) form a disordered region. An N6,N6,N6-trimethyllysine; alternate mark is found at Lys-5 and Lys-10. 2 positions are modified to N6,N6-dimethyllysine; alternate: Lys-5 and Lys-10. N6-acetyllysine; alternate occurs at positions 5 and 10. Residue Lys-5 is modified to N6-methyllysine; alternate. Ser-11 carries the post-translational modification Phosphoserine. N6-acetyllysine occurs at positions 15 and 24. Residue Lys-28 is modified to N6,N6,N6-trimethyllysine; alternate. The residue at position 28 (Lys-28) is an N6,N6-dimethyllysine; alternate. Position 28 is an N6-methyllysine; alternate (Lys-28). Ser-29 carries the phosphoserine modification. Lys-37 is modified (N6,N6,N6-trimethyllysine; alternate). At Lys-37 the chain carries N6,N6-dimethyllysine; alternate. At Lys-37 the chain carries N6-methyllysine; alternate. Lys-80 is subject to N6-methyllysine.

It belongs to the histone H3 family. As to quaternary structure, the nucleosome is a histone octamer containing two molecules each of H2A, H2B, H3 and H4 assembled in one H3-H4 heterotetramer and two H2A-H2B heterodimers. The octamer wraps approximately 147 bp of DNA. Interacts (via N-terminal tail mono-acetylated on Lys-15) with swsn-4 (via Bromo domain); the interaction is direct. Phosphorylated at Ser-11 and Ser-29 during M phase. Phosphorylation of Ser-11 requires air-2 but not air-1. Dephosphorylated by gsp-1 and/or gsp-2 during chromosome segregation. In terms of processing, acetylation is generally linked to gene activation. Post-translationally, methylation at Lys-5 is linked to gene activation and is absent from male inactive X chromosome chromatin. Methylation at Lys-10 is linked to gene repression and is enriched in male inactive X chromosome chromatin. Methylation at Lys-37 occurs on the entire length of autosomes during meiotic prophase. Trimethylation at Lys-10 and Lys-37 is specifically antagonized by jmjd-2. Dimethylation and trimethylation at Lys-28 occurs in all nuclei. The mes-2-mes-3-mes-6 complex may be responsible for Lys-28 methylation in most of the germline and in the early embryo.

It is found in the nucleus. The protein resides in the chromosome. In terms of biological role, core component of nucleosome. Nucleosomes wrap and compact DNA into chromatin, limiting DNA accessibility to the cellular machineries which require DNA as a template. Histones thereby play a central role in transcription regulation, DNA repair, DNA replication and chromosomal stability. DNA accessibility is regulated via a complex set of post-translational modifications of histones, also called histone code, and nucleosome remodeling. The polypeptide is Histone H3 (his-2) (Caenorhabditis elegans).